Here is a 128-residue protein sequence, read N- to C-terminus: Sulfurtransferase TusD (128 aa).

The Cysteine persulfide intermediate role is filled by Cys78.

The protein belongs to the DsrE/TusD family. As to quaternary structure, heterohexamer, formed by a dimer of trimers. The hexameric TusBCD complex contains 2 copies each of TusB, TusC and TusD. The TusBCD complex interacts with TusE.

The protein localises to the cytoplasm. In terms of biological role, part of a sulfur-relay system required for 2-thiolation of 5-methylaminomethyl-2-thiouridine (mnm(5)s(2)U) at tRNA wobble positions. Accepts sulfur from TusA and transfers it in turn to TusE. The chain is Sulfurtransferase TusD from Salmonella newport (strain SL254).